The chain runs to 473 residues: Phosphatidylserine synthase 1 (473 aa).

Topologically, residues 1-35 (MAACVGSRTLSKDDVNYRLHFRMINEQQVEDITLE) are cytoplasmic. A helical membrane pass occupies residues 36–56 (FFYRPHTITLLSFTILSLMAF). The Lumenal segment spans residues 57–72 (AFTRDDSVPEENIWRG). The helical transmembrane segment at 73-93 (ILSVIFFFLIISVLAFPNGPF) threads the bilayer. At 94-102 (TRPHPAIWR) the chain is on the cytoplasmic side. Residues 103 to 123 (MVFGLSVLYFLFLVFVLFLNF) form a helical membrane-spanning segment. At 124-186 (EQVKAVMYWL…AMKALLIRSY (63 aa)) the chain is on the lumenal side. Residues 187 to 207 (GLCWTISITWELTELFFMHLL) form a helical membrane-spanning segment. Over 208-216 (PNFAECWWD) the chain is Cytoplasmic. Residues 217 to 237 (QVILDILLCNGGGIWLGMVVC) traverse the membrane as a helical segment. Over 238–286 (RFLEMRTYHWASFKDIHTTTGKIKRAVLQFTPASWTYVRWFDPKSSFQR) the chain is Lumenal. Residues 287-307 (VAGIYLFMIIWQLTELNTFFL) traverse the membrane as a helical segment. The Cytoplasmic portion of the chain corresponds to 308 to 319 (KHIFVFQASHPL). The helical transmembrane segment at 320 to 342 (SWGRILFIGIITAPTVRQYYAYL) threads the bilayer. Topologically, residues 343 to 355 (TDTQCKRVGTQCW) are lumenal. Residues 356–376 (VFGVIAFLEAIVCIKFGQDLF) form a helical membrane-spanning segment. Over 377–380 (SKTQ) the chain is Cytoplasmic. The helical transmembrane segment at 381 to 401 (ILYVVFWLLCVAFTTFLCLYG) threads the bilayer. At 402 to 473 (MVWYAEYYGH…SKVTNGIGKK (72 aa)) the chain is on the lumenal side. The disordered stretch occupies residues 420–473 (EDSPYSPDASWLHSKFSKGADNSPPKHPVNSESHSSRRRNRHSRSKVTNGIGKK). A compositionally biased stretch (basic residues) spans 455 to 464 (SRRRNRHSRS).

Belongs to the phosphatidyl serine synthase family.

It localises to the endoplasmic reticulum membrane. The enzyme catalyses a 1,2-diacyl-sn-glycero-3-phosphoethanolamine + L-serine = a 1,2-diacyl-sn-glycero-3-phospho-L-serine + ethanolamine. It carries out the reaction a 1,2-diacyl-sn-glycero-3-phosphocholine + L-serine = a 1,2-diacyl-sn-glycero-3-phospho-L-serine + choline. It participates in phospholipid metabolism; phosphatidylserine biosynthesis. In terms of biological role, catalyzes a base-exchange reaction in which the polar head group of phosphatidylethanolamine (PE) or phosphatidylcholine (PC) is replaced by L-serine. Catalyzes mainly the conversion of phosphatidylcholine but also converts, in vitro and to a lesser extent, phosphatidylethanolamine. This Gallus gallus (Chicken) protein is Phosphatidylserine synthase 1 (PTDSS1).